A 487-amino-acid chain; its full sequence is NAD(+)--arginine ADP-ribosyltransferase EFV (487 aa).

A coiled-coil region spans residues 2–51 (SQLNKWQKELQALQKANYQETDNQLFNVYRQSLIDIKKRLKVYTENAESL). The 173-residue stretch at 315-487 (LDFFGQSDLQ…DNILEVTILG (173 aa)) folds into the TR mART core domain. Residues 346-358 (TSDA…KILR) and 394-400 (RGVSANE) each bind NAD(+). Active-site residues include R394, S415, and E463. NAD(+) is bound at residue E463.

It localises to the secreted. It catalyses the reaction L-arginyl-[protein] + NAD(+) = N(omega)-(ADP-D-ribosyl)-L-arginyl-[protein] + nicotinamide + H(+). Functionally, a probable mono(ADP-ribosyl)transferase, it may ADP-ribosylate Arg in target protein(s). Upon expression in yeast cells causes cell death. The polypeptide is NAD(+)--arginine ADP-ribosyltransferase EFV (Enterococcus faecalis (strain ATCC 700802 / V583)).